The following is a 133-amino-acid chain: Peptide methionine sulfoxide reductase MsrB (133 aa).

In terms of domain architecture, MsrB spans 8–130 (LEEWRAMLDP…NSVCLDFKPR (123 aa)). Residues Cys-47, Cys-50, Cys-96, and Cys-99 each coordinate Zn(2+). Cys-119 functions as the Nucleophile in the catalytic mechanism.

The protein belongs to the MsrB Met sulfoxide reductase family. Zn(2+) is required as a cofactor.

It carries out the reaction L-methionyl-[protein] + [thioredoxin]-disulfide + H2O = L-methionyl-(R)-S-oxide-[protein] + [thioredoxin]-dithiol. The chain is Peptide methionine sulfoxide reductase MsrB from Pseudomonas putida (strain W619).